We begin with the raw amino-acid sequence, 202 residues long: Imidazoleglycerol-phosphate dehydratase (202 aa).

Belongs to the imidazoleglycerol-phosphate dehydratase family.

Its subcellular location is the cytoplasm. It carries out the reaction D-erythro-1-(imidazol-4-yl)glycerol 3-phosphate = 3-(imidazol-4-yl)-2-oxopropyl phosphate + H2O. Its pathway is amino-acid biosynthesis; L-histidine biosynthesis; L-histidine from 5-phospho-alpha-D-ribose 1-diphosphate: step 6/9. This Rhizobium leguminosarum bv. trifolii (strain WSM2304) protein is Imidazoleglycerol-phosphate dehydratase.